The chain runs to 209 residues: MIGLIGRKVGMTRVFTEDGVSIPVTVVEVEANRVSQVKTLETDGYAAIQVTTGSKKANRVTKPEAGHFAKAGVEAGRGLWEFRLENGEEFAVGSELTVELFNEVKKVDVTGTSKGKGFQGAVKRWNFRTQDMTHGNSLSHRAPGSIGQCQTPGRVFKGKKMAGHMGAERVTTQNLEIVRVDAERNLLLIKGAVPGATGGNVIVKPAVKA.

Q150 carries the N5-methylglutamine modification.

It belongs to the universal ribosomal protein uL3 family. In terms of assembly, part of the 50S ribosomal subunit. Forms a cluster with proteins L14 and L19. Methylated by PrmB.

In terms of biological role, one of the primary rRNA binding proteins, it binds directly near the 3'-end of the 23S rRNA, where it nucleates assembly of the 50S subunit. The polypeptide is Large ribosomal subunit protein uL3 (Vibrio cholerae serotype O1 (strain ATCC 39541 / Classical Ogawa 395 / O395)).